A 209-amino-acid polypeptide reads, in one-letter code: NAD(P)H-quinone oxidoreductase subunit I (209 aa).

2 consecutive 4Fe-4S ferredoxin-type domains span residues glycine 55 to glutamate 84 and asparagine 95 to glutamate 124. Cysteine 64, cysteine 67, cysteine 70, cysteine 74, cysteine 104, cysteine 107, cysteine 110, and cysteine 114 together coordinate [4Fe-4S] cluster.

Belongs to the complex I 23 kDa subunit family. As to quaternary structure, NDH-1 is composed of at least 11 different subunits. [4Fe-4S] cluster serves as cofactor.

Its subcellular location is the cell inner membrane. The enzyme catalyses a plastoquinone + NADH + (n+1) H(+)(in) = a plastoquinol + NAD(+) + n H(+)(out). The catalysed reaction is a plastoquinone + NADPH + (n+1) H(+)(in) = a plastoquinol + NADP(+) + n H(+)(out). Functionally, NDH-1 shuttles electrons from an unknown electron donor, via FMN and iron-sulfur (Fe-S) centers, to quinones in the respiratory and/or the photosynthetic chain. The immediate electron acceptor for the enzyme in this species is believed to be plastoquinone. Couples the redox reaction to proton translocation, and thus conserves the redox energy in a proton gradient. The chain is NAD(P)H-quinone oxidoreductase subunit I from Gloeobacter violaceus (strain ATCC 29082 / PCC 7421).